The primary structure comprises 90 residues: Translation initiation factor IF-1 (90 aa).

Residues 7 to 76 (KEDVIRMEGT…TRGRIVYRKK (70 aa)) form the S1-like domain.

The protein belongs to the IF-1 family. As to quaternary structure, component of the 30S ribosomal translation pre-initiation complex which assembles on the 30S ribosome in the order IF-2 and IF-3, IF-1 and N-formylmethionyl-tRNA(fMet); mRNA recruitment can occur at any time during PIC assembly.

It is found in the cytoplasm. One of the essential components for the initiation of protein synthesis. Stabilizes the binding of IF-2 and IF-3 on the 30S subunit to which N-formylmethionyl-tRNA(fMet) subsequently binds. Helps modulate mRNA selection, yielding the 30S pre-initiation complex (PIC). Upon addition of the 50S ribosomal subunit IF-1, IF-2 and IF-3 are released leaving the mature 70S translation initiation complex. The protein is Translation initiation factor IF-1 of Fervidobacterium nodosum (strain ATCC 35602 / DSM 5306 / Rt17-B1).